The primary structure comprises 1721 residues: Ras guanine nucleotide exchange factor R (1721 aa).

Positions 148–279 form a coiled coil; that stretch reads QLEDEVDLVH…LQQQQQQQRS (132 aa). Disordered regions lie at residues 213 to 232, 445 to 515, 551 to 701, 716 to 766, 797 to 837, and 929 to 981; these read QQQK…KEEK, SSLG…NQQP, ATTT…VDKQ, RTPL…KSPS, TITI…TPNK, and DEVS…DPVS. The span at 216-232 shows a compositional bias: basic and acidic residues; it reads KHQEEKEKNDQKEKEEK. Low complexity-rich tracts occupy residues 454 to 469, 479 to 493, 501 to 515, and 551 to 581; these read SPEK…STSE, HNNN…STNN, PSLS…NQQP, and ATTT…LSIS. A compositionally biased stretch (polar residues) spans 618-627; that stretch reads NGTTSPRNNE. Composition is skewed to low complexity over residues 628-651 and 663-686; these read SSVT…VNTI and TPTT…SQND. The segment covering 687 to 701 has biased composition (basic and acidic residues); sequence KQNENNNKENFVDKQ. Composition is skewed to low complexity over residues 724–748, 797–836, and 933–952; these read SSNS…TNSS, TITI…TTPN, and ESSS…NTPS. Residues 802-831 are a coiled coil; that stretch reads NNNNNNNNNNNNNNNNNNNIQQQQQQQQQI. Over residues 968 to 978 the composition is skewed to polar residues; it reads NLSSINNSSYD. The N-terminal Ras-GEF domain occupies 1291–1411; that stretch reads GRYVPKAGTL…ILGGLIKKKE (121 aa). Residues 1447–1676 form the Ras-GEF domain; the sequence is NESEIARQLT…YQLSLIREPR (230 aa).

Phosphorylated on threonine residues.

Functionally, promotes the exchange of Ras-bound GDP by GTP. May also play a role in the activation of rasG. In Dictyostelium discoideum (Social amoeba), this protein is Ras guanine nucleotide exchange factor R (gefR).